Reading from the N-terminus, the 401-residue chain is MPKKTIANLSRADVEGKRVLVRVDFNVPLDDAGNITDDTRIRAALPTIQDLISKGAKVILCSHFGRPKGKVVESMRLTPTAKRLSELLGQDVVMCDDCVGASVTEAVNKLENGQVALLENLRFHAEEEGNDPEFSKQLAANADLYVNDAFGTAHRAHASTEGVTHYLSPSVAGYLIEKELNYLQSAIENPQRPLAAIIGGSKVSSKIGVIETLLEKCDKLLIGGGMIFTFYKARGLSVGKSLVEEDKLELAKSLEAKASEKGVQLLLPTDVVVADAFDANANDKTVKIEEIPDGWMGLDIGPDSVKLFQDALADCKSVIWNGPMGVFEFDKFAKGTEAIAYTLETLTGKGATTIIGGGDSVAAVEKVGVADKMSHISTGGGASLELLEGKVLPGIAALDEA.

Residues 24–26 (DFN), Arg40, 63–66 (HFGR), Arg122, and Arg155 contribute to the substrate site. Residues Lys206, Gly297, Glu328, and 357 to 360 (GGDS) contribute to the ATP site.

This sequence belongs to the phosphoglycerate kinase family. Monomer.

The protein localises to the cytoplasm. The enzyme catalyses (2R)-3-phosphoglycerate + ATP = (2R)-3-phospho-glyceroyl phosphate + ADP. It functions in the pathway carbohydrate degradation; glycolysis; pyruvate from D-glyceraldehyde 3-phosphate: step 2/5. In Gloeothece citriformis (strain PCC 7424) (Cyanothece sp. (strain PCC 7424)), this protein is Phosphoglycerate kinase.